Here is a 710-residue protein sequence, read N- to C-terminus: Polyribonucleotide nucleotidyltransferase (710 aa).

Mg(2+) is bound by residues Asp-489 and Asp-495. The region spanning 556-615 is the KH domain; that stretch reads PKIDTIKIDVDKIKVVIGKGGETIDKIIAETGVKIDIDDEGNVSIYSSDQAAIDRTKEII. In terms of domain architecture, S1 motif spans 625 to 693; the sequence is GEVYHAKVIR…EKGRVDASMK (69 aa). Residues 691 to 710 form a disordered region; it reads SMKALIPRPPKPEKKEEKHD. Basic and acidic residues predominate over residues 700-710; that stretch reads PKPEKKEEKHD.

The protein belongs to the polyribonucleotide nucleotidyltransferase family. Mg(2+) is required as a cofactor.

The protein resides in the cytoplasm. The enzyme catalyses RNA(n+1) + phosphate = RNA(n) + a ribonucleoside 5'-diphosphate. Involved in mRNA degradation. Catalyzes the phosphorolysis of single-stranded polyribonucleotides processively in the 3'- to 5'-direction. In Streptococcus pyogenes serotype M4 (strain MGAS10750), this protein is Polyribonucleotide nucleotidyltransferase.